The chain runs to 347 residues: Large ribosomal subunit protein uL3 (347 aa).

A disordered region spans residues R325 to Q347.

It belongs to the universal ribosomal protein uL3 family. Part of the 50S ribosomal subunit. Forms a cluster with proteins L14 and L24e.

In terms of biological role, one of the primary rRNA binding proteins, it binds directly near the 3'-end of the 23S rRNA, where it nucleates assembly of the 50S subunit. This Thermococcus onnurineus (strain NA1) protein is Large ribosomal subunit protein uL3.